We begin with the raw amino-acid sequence, 595 residues long: Thiol:disulfide interchange protein DsbD (595 aa).

Positions 1–24 are cleaved as a signal peptide; the sequence is MAQRFITLILLLCSVLLAPHSAQS. C134 and C140 form a disulfide bridge. Residues 166–186 form a disordered region; the sequence is NSSATVNPPATTQPEGDATPV. 9 helical membrane-spanning segments follow: residues 197–217, 233–253, 270–290, 311–331, 332–352, 353–373, 384–404, 411–431, and 435–455; these read ALLI…YPLI, ILIL…LLGL, YVLI…FGLY, GGSL…CSPC, TTAP…MLAG, GGTL…VTLF, WMQY…VFLL, VWGL…AFVL, and AHAG…LIVA. Cysteines 209 and 331 form a disulfide. In terms of domain architecture, Thioredoxin spans 452-592; that stretch reads LIVARPLQDW…FLQHLQNTPA (141 aa). A disulfide bridge connects residues C507 and C510.

This sequence belongs to the thioredoxin family. DsbD subfamily.

The protein localises to the cell inner membrane. The enzyme catalyses [protein]-dithiol + NAD(+) = [protein]-disulfide + NADH + H(+). It carries out the reaction [protein]-dithiol + NADP(+) = [protein]-disulfide + NADPH + H(+). In terms of biological role, required to facilitate the formation of correct disulfide bonds in some periplasmic proteins and for the assembly of the periplasmic c-type cytochromes. Acts by transferring electrons from cytoplasmic thioredoxin to the periplasm. This transfer involves a cascade of disulfide bond formation and reduction steps. In Yersinia pestis bv. Antiqua (strain Nepal516), this protein is Thiol:disulfide interchange protein DsbD.